The sequence spans 212 residues: Ropporin-1 (212 aa).

An RIIa domain is found at 12–43; sequence PELPELLKQFTKAAIRTQPPDLIQWAAEYFGA. A Phosphoserine modification is found at Ser-56. The interaction with RHPN1 stretch occupies residues 209 to 212; that stretch reads VRLE.

The protein belongs to the ropporin family. Homodimer. Interacts with AKAP3. May interact with SPA17. Interacts with RHPN1. Interacts with FSCB; the interaction increases upon spermatozoa capacitation conditions. Interacts with CFAP61. Post-translationally, sumoylated, sumoylation decreases upon spermatozoa capacitation conditions.

The protein resides in the cell projection. The protein localises to the cilium. It localises to the flagellum. Functionally, important for male fertility. With ROPN1L, involved in fibrous sheath integrity and sperm motility, plays a role in PKA-dependent signaling processes required for spermatozoa capacitation. The protein is Ropporin-1 (Ropn1) of Rattus norvegicus (Rat).